A 147-amino-acid chain; its full sequence is Large ribosomal subunit protein bL9 (147 aa).

It belongs to the bacterial ribosomal protein bL9 family.

In terms of biological role, binds to the 23S rRNA. The polypeptide is Large ribosomal subunit protein bL9 (Trichlorobacter lovleyi (strain ATCC BAA-1151 / DSM 17278 / SZ) (Geobacter lovleyi)).